A 620-amino-acid chain; its full sequence is Chaperone protein HscA homolog (620 aa).

The protein belongs to the heat shock protein 70 family.

Chaperone involved in the maturation of iron-sulfur cluster-containing proteins. Has a low intrinsic ATPase activity which is markedly stimulated by HscB. The sequence is that of Chaperone protein HscA homolog from Herminiimonas arsenicoxydans.